Consider the following 298-residue polypeptide: Cyanophycinase (298 aa).

Residues Ser155, Glu173, and His197 each act as charge relay system in the active site.

The protein belongs to the peptidase S51 family.

It carries out the reaction [L-4-(L-arginin-2-N-yl)aspartate](n) + H2O = [L-4-(L-arginin-2-N-yl)aspartate](n-1) + L-4-(L-arginin-2-N-yl)aspartate. In terms of biological role, exopeptidase that catalyzes the hydrolytic cleavage of multi-L-arginyl-poly-L-aspartic acid (cyanophycin; a water-insoluble reserve polymer) into aspartate-arginine dipeptides. This Trichormus variabilis (strain ATCC 29413 / PCC 7937) (Anabaena variabilis) protein is Cyanophycinase (cphB).